The primary structure comprises 179 residues: ATP synthase subunit delta (179 aa).

The protein belongs to the ATPase delta chain family. As to quaternary structure, F-type ATPases have 2 components, F(1) - the catalytic core - and F(0) - the membrane proton channel. F(1) has five subunits: alpha(3), beta(3), gamma(1), delta(1), epsilon(1). F(0) has three main subunits: a(1), b(2) and c(10-14). The alpha and beta chains form an alternating ring which encloses part of the gamma chain. F(1) is attached to F(0) by a central stalk formed by the gamma and epsilon chains, while a peripheral stalk is formed by the delta and b chains.

The protein localises to the cell inner membrane. F(1)F(0) ATP synthase produces ATP from ADP in the presence of a proton or sodium gradient. F-type ATPases consist of two structural domains, F(1) containing the extramembraneous catalytic core and F(0) containing the membrane proton channel, linked together by a central stalk and a peripheral stalk. During catalysis, ATP synthesis in the catalytic domain of F(1) is coupled via a rotary mechanism of the central stalk subunits to proton translocation. In terms of biological role, this protein is part of the stalk that links CF(0) to CF(1). It either transmits conformational changes from CF(0) to CF(1) or is implicated in proton conduction. The sequence is that of ATP synthase subunit delta from Koribacter versatilis (strain Ellin345).